Reading from the N-terminus, the 183-residue chain is Large ribosomal subunit protein uL6 (183 aa).

This sequence belongs to the universal ribosomal protein uL6 family. Part of the 50S ribosomal subunit.

In terms of biological role, this protein binds to the 23S rRNA, and is important in its secondary structure. It is located near the subunit interface in the base of the L7/L12 stalk, and near the tRNA binding site of the peptidyltransferase center. The chain is Large ribosomal subunit protein uL6 from Methanococcus aeolicus (strain ATCC BAA-1280 / DSM 17508 / OCM 812 / Nankai-3).